Here is a 597-residue protein sequence, read N- to C-terminus: Elongation factor 4 (597 aa).

The region spanning 2–184 (KNIRNFSIIA…TIVAKVPAPE (183 aa)) is the tr-type G domain. GTP contacts are provided by residues 14 to 19 (DHGKST) and 131 to 134 (NKID).

The protein belongs to the TRAFAC class translation factor GTPase superfamily. Classic translation factor GTPase family. LepA subfamily.

It is found in the cell inner membrane. It catalyses the reaction GTP + H2O = GDP + phosphate + H(+). In terms of biological role, required for accurate and efficient protein synthesis under certain stress conditions. May act as a fidelity factor of the translation reaction, by catalyzing a one-codon backward translocation of tRNAs on improperly translocated ribosomes. Back-translocation proceeds from a post-translocation (POST) complex to a pre-translocation (PRE) complex, thus giving elongation factor G a second chance to translocate the tRNAs correctly. Binds to ribosomes in a GTP-dependent manner. The sequence is that of Elongation factor 4 from Francisella tularensis subsp. mediasiatica (strain FSC147).